We begin with the raw amino-acid sequence, 179 residues long: SCAN domain-containing protein 1 (179 aa).

A disordered region spans residues 1–104 (MAATEPILAA…PGPAGSRLGP (104 aa)). Low complexity predominate over residues 52–80 (SPNAAVPEAIPTPRAAASAALELPLGPAP). The SCAN box domain occupies 108-166 (RQRFRQFRYQDAAGPREAFRQLRELSRQWLRPDIRTKEQIVEMLVQEQLLAILPEAARA).

As to quaternary structure, interacts with ZNF202.

Its subcellular location is the nucleus. Its function is as follows. May regulate transcriptional activity. This is SCAN domain-containing protein 1 (SCAND1) from Homo sapiens (Human).